Here is a 95-residue protein sequence, read N- to C-terminus: Late cornified envelope protein 7A (95 aa).

This sequence belongs to the LCE family.

In terms of biological role, precursors of the cornified envelope of the stratum corneum. This is Late cornified envelope protein 7A from Homo sapiens (Human).